The sequence spans 139 residues: Large ribosomal subunit protein uL16 (139 aa).

The protein belongs to the universal ribosomal protein uL16 family. Part of the 50S ribosomal subunit.

Its function is as follows. Binds 23S rRNA and is also seen to make contacts with the A and possibly P site tRNAs. In Chlorobium phaeobacteroides (strain BS1), this protein is Large ribosomal subunit protein uL16.